Here is a 273-residue protein sequence, read N- to C-terminus: Undecaprenyl-diphosphatase (273 aa).

7 helical membrane passes run 13-35 (GLVE…VFGN), 45-62 (VFEI…VFEY), 82-102 (FVLN…LFGK), 108-128 (LFNP…ILWV), 186-206 (TEFS…YDVL), 219-239 (LILI…KALL), and 250-270 (FAYY…SGWI).

The protein belongs to the UppP family.

Its subcellular location is the cell inner membrane. It catalyses the reaction di-trans,octa-cis-undecaprenyl diphosphate + H2O = di-trans,octa-cis-undecaprenyl phosphate + phosphate + H(+). Its function is as follows. Catalyzes the dephosphorylation of undecaprenyl diphosphate (UPP). Confers resistance to bacitracin. The chain is Undecaprenyl-diphosphatase from Neisseria meningitidis serogroup A / serotype 4A (strain DSM 15465 / Z2491).